The chain runs to 68 residues: Serine rich endogenous peptide 22 (68 aa).

The N-terminal stretch at 1-25 (MNKALVWLITLLFLIFSATPNRVLA) is a signal peptide. An SCOOP motif motif is present at residues 50 to 64 (KIGVGASNSGHSPGA). The short motif at 56–58 (SNS) is the SxS motif essential for MIK2 binding element.

Belongs to the serine rich endogenous peptide (SCOOP) phytocytokine family. Interacts with MIK2 (via extracellular leucine-rich repeat domain); this interaction triggers the formation of complex between MIK2 and the BAK1/SERK3 and SERK4 coreceptors, and subsequent BAK1 activation by phosphorylation.

The protein resides in the cell membrane. Its subcellular location is the secreted. It is found in the extracellular space. The protein localises to the apoplast. Brassicaceae-specific phytocytokine (plant endogenous peptide released into the apoplast) perceived by MIK2 in a BAK1/SERK3 and SERK4 coreceptors-dependent manner, that modulates various physiological and antimicrobial processes including growth prevention and reactive oxygen species (ROS) response regulation. The chain is Serine rich endogenous peptide 22 from Arabidopsis thaliana (Mouse-ear cress).